A 410-amino-acid polypeptide reads, in one-letter code: Phosphoglycerate kinase (410 aa).

Residues 19–21 (DLN), R34, 57–60 (HQGK), R114, and R154 each bind substrate. Residues E332 and 358 to 361 (GGHS) each bind ATP.

The protein belongs to the phosphoglycerate kinase family. In terms of assembly, homodimer.

Its subcellular location is the cytoplasm. The enzyme catalyses (2R)-3-phosphoglycerate + ATP = (2R)-3-phospho-glyceroyl phosphate + ADP. The protein operates within carbohydrate degradation; glycolysis; pyruvate from D-glyceraldehyde 3-phosphate: step 2/5. The polypeptide is Phosphoglycerate kinase (pgk) (Pyrococcus furiosus (strain ATCC 43587 / DSM 3638 / JCM 8422 / Vc1)).